A 286-amino-acid polypeptide reads, in one-letter code: ATP synthase gamma chain (286 aa).

The protein belongs to the ATPase gamma chain family. F-type ATPases have 2 components, CF(1) - the catalytic core - and CF(0) - the membrane proton channel. CF(1) has five subunits: alpha(3), beta(3), gamma(1), delta(1), epsilon(1). CF(0) has three main subunits: a, b and c.

It is found in the cell inner membrane. In terms of biological role, produces ATP from ADP in the presence of a proton gradient across the membrane. The gamma chain is believed to be important in regulating ATPase activity and the flow of protons through the CF(0) complex. The polypeptide is ATP synthase gamma chain (Pseudomonas entomophila (strain L48)).